The chain runs to 296 residues: Arginine/serine-rich protein 1 (296 aa).

The interval 1 to 131 is disordered; it reads MSNYVNDMWP…RSRSRSRERS (131 aa). Ser12 is subject to Phosphoserine. Low complexity predominate over residues 20–31; it reads SASRSGGSSRLS. The segment covering 32–125 has biased composition (basic residues); sequence SRSRSRSFSR…RSRSRSRSRS (94 aa). Phosphoserine is present on residues Ser111 and Ser113. Arg141 bears the Omega-N-methylarginine mark. Positions 156–165 are enriched in basic and acidic residues; sequence ERSRWRDRSR. Disordered regions lie at residues 156-175 and 217-296; these read ERSR…TPFR and SHGI…WIPV. Residues 245–261 show a composition bias toward polar residues; it reads EKPSQQRSIAFSSNNSV. Residues 272 to 287 show a composition bias toward basic and acidic residues; sequence ATEETSSRSPKIDKKK. Ser280 is subject to Phosphoserine.

It belongs to the RSRP family. Post-translationally, phosphorylated. Phosphorylation at Ser-111 and Ser-113 mediates the interaction with spliceosome proteins.

The protein resides in the nucleus. Its function is as follows. Probably acts as a spliceosomal factor that contributes to spliceosome assembly and regulates the isoform switching of proteins such as PARP6. This Macaca fascicularis (Crab-eating macaque) protein is Arginine/serine-rich protein 1 (RSRP1).